The chain runs to 206 residues: Guanylate kinase (206 aa).

Residues 6 to 184 (GTLYIISAPS…ALDDLKAIFR (179 aa)) form the Guanylate kinase-like domain. 13 to 20 (APSGAGKS) contributes to the ATP binding site.

Belongs to the guanylate kinase family.

Its subcellular location is the cytoplasm. The enzyme catalyses GMP + ATP = GDP + ADP. Its function is as follows. Essential for recycling GMP and indirectly, cGMP. The protein is Guanylate kinase of Pseudomonas fluorescens (strain Pf0-1).